Here is a 399-residue protein sequence, read N- to C-terminus: Elongation factor Tu 1 (399 aa).

The tr-type G domain occupies 10–209 (KPHVNIGTIG…QVDTYIPEPE (200 aa)). Positions 19–26 (GHVDHGKT) are G1. 19–26 (GHVDHGKT) lines the GTP pocket. T26 contributes to the Mg(2+) binding site. Residues 60 to 64 (GITIA) are G2. A G3 region spans residues 81-84 (DCPG). GTP-binding positions include 81 to 85 (DCPGH) and 136 to 139 (NKAD). Positions 136 to 139 (NKAD) are G4. Positions 174-176 (SAL) are G5.

It belongs to the TRAFAC class translation factor GTPase superfamily. Classic translation factor GTPase family. EF-Tu/EF-1A subfamily. In terms of assembly, monomer.

The protein localises to the cytoplasm. The enzyme catalyses GTP + H2O = GDP + phosphate + H(+). In terms of biological role, GTP hydrolase that promotes the GTP-dependent binding of aminoacyl-tRNA to the A-site of ribosomes during protein biosynthesis. This Syntrophotalea carbinolica (strain DSM 2380 / NBRC 103641 / GraBd1) (Pelobacter carbinolicus) protein is Elongation factor Tu 1.